The primary structure comprises 496 residues: Adenosylhomocysteinase (496 aa).

Substrate-binding residues include threonine 68, aspartate 157, and glutamate 219. 220 to 222 lines the NAD(+) pocket; that stretch reads TTT. Substrate-binding residues include lysine 249 and aspartate 253. Residues asparagine 254, 283-288, glutamate 306, asparagine 341, 362-364, and asparagine 410 contribute to the NAD(+) site; these read GYGDVG and IGH.

The protein belongs to the adenosylhomocysteinase family. NAD(+) serves as cofactor.

Its subcellular location is the cytoplasm. The enzyme catalyses S-adenosyl-L-homocysteine + H2O = L-homocysteine + adenosine. Its pathway is amino-acid biosynthesis; L-homocysteine biosynthesis; L-homocysteine from S-adenosyl-L-homocysteine: step 1/1. Its function is as follows. May play a key role in the regulation of the intracellular concentration of adenosylhomocysteine. This chain is Adenosylhomocysteinase, found in Mycolicibacterium paratuberculosis (strain ATCC BAA-968 / K-10) (Mycobacterium paratuberculosis).